We begin with the raw amino-acid sequence, 628 residues long: tRNA (guanine(37)-N(1))-methyltransferase (628 aa).

S-adenosyl-L-methionine is bound by residues His-265, Asp-303–Leu-304, Asp-342–Gly-343, and Asn-445.

It belongs to the class I-like SAM-binding methyltransferase superfamily. TRM5/TYW2 family. In terms of assembly, monomer.

The protein localises to the mitochondrion matrix. Its subcellular location is the nucleus. The protein resides in the cytoplasm. The enzyme catalyses guanosine(37) in tRNA + S-adenosyl-L-methionine = N(1)-methylguanosine(37) in tRNA + S-adenosyl-L-homocysteine + H(+). In terms of biological role, specifically methylates the N1 position of guanosine-37 in various cytoplasmic and mitochondrial tRNAs. Methylation is not dependent on the nature of the nucleoside 5' of the target nucleoside. This is the first step in the biosynthesis of wybutosine (yW), a modified base adjacent to the anticodon of tRNAs and required for accurate decoding. This is tRNA (guanine(37)-N(1))-methyltransferase from Mycosarcoma maydis (Corn smut fungus).